We begin with the raw amino-acid sequence, 350 residues long: uncharacterized protein (350 aa).

The N-terminal stretch at 1–27 (MKNKKRVLIASSLSCAILLLSAATTQA) is a signal peptide. The tract at residues 28–71 (NSAHKDSQDQNKKEHVDKSQQKEKRNVTNKDKNSTVPDDIGKNG) is disordered. The span at 30 to 60 (AHKDSQDQNKKEHVDKSQQKEKRNVTNKDKN) shows a compositional bias: basic and acidic residues.

It belongs to the aerolysin family.

This is an uncharacterized protein from Staphylococcus aureus (strain MSSA476).